The following is a 172-amino-acid chain: Adenine phosphoribosyltransferase (172 aa).

Belongs to the purine/pyrimidine phosphoribosyltransferase family. As to quaternary structure, homodimer.

The protein resides in the cytoplasm. It carries out the reaction AMP + diphosphate = 5-phospho-alpha-D-ribose 1-diphosphate + adenine. It participates in purine metabolism; AMP biosynthesis via salvage pathway; AMP from adenine: step 1/1. Its function is as follows. Catalyzes a salvage reaction resulting in the formation of AMP, that is energically less costly than de novo synthesis. In Prochlorococcus marinus (strain NATL1A), this protein is Adenine phosphoribosyltransferase.